Reading from the N-terminus, the 608-residue chain is Phosphomethylpyrimidine synthase (608 aa).

Residues Asn-216, Met-245, Tyr-274, His-310, 330-332 (SRG), 371-374 (DGLR), and Glu-410 contribute to the substrate site. His-414 is a Zn(2+) binding site. Tyr-437 lines the substrate pocket. His-478 is a binding site for Zn(2+). Residues Cys-558, Cys-561, and Cys-566 each contribute to the [4Fe-4S] cluster site.

It belongs to the ThiC family. Homodimer. The cofactor is [4Fe-4S] cluster.

It catalyses the reaction 5-amino-1-(5-phospho-beta-D-ribosyl)imidazole + S-adenosyl-L-methionine = 4-amino-2-methyl-5-(phosphooxymethyl)pyrimidine + CO + 5'-deoxyadenosine + formate + L-methionine + 3 H(+). It participates in cofactor biosynthesis; thiamine diphosphate biosynthesis. Functionally, catalyzes the synthesis of the hydroxymethylpyrimidine phosphate (HMP-P) moiety of thiamine from aminoimidazole ribotide (AIR) in a radical S-adenosyl-L-methionine (SAM)-dependent reaction. This chain is Phosphomethylpyrimidine synthase, found in Ruegeria sp. (strain TM1040) (Silicibacter sp.).